The following is a 142-amino-acid chain: Large ribosomal subunit protein uL13 (142 aa).

This sequence belongs to the universal ribosomal protein uL13 family. As to quaternary structure, part of the 50S ribosomal subunit.

Functionally, this protein is one of the early assembly proteins of the 50S ribosomal subunit, although it is not seen to bind rRNA by itself. It is important during the early stages of 50S assembly. The protein is Large ribosomal subunit protein uL13 of Burkholderia cenocepacia (strain ATCC BAA-245 / DSM 16553 / LMG 16656 / NCTC 13227 / J2315 / CF5610) (Burkholderia cepacia (strain J2315)).